A 202-amino-acid chain; its full sequence is Rho GDP-dissociation inhibitor (202 aa).

A2 carries the N-acetylalanine modification. A Phosphothreonine modification is found at T27. Residue S40 is modified to Phosphoserine.

The protein belongs to the Rho GDI family.

The protein resides in the cytoplasm. Its function is as follows. Regulates the GDP/GTP exchange reaction of the Rho proteins by inhibiting the dissociation of GDP from them, and the subsequent binding of GTP to them. This is Rho GDP-dissociation inhibitor (RDI1) from Saccharomyces cerevisiae (strain ATCC 204508 / S288c) (Baker's yeast).